A 214-amino-acid chain; its full sequence is MRIILLGAPGAGKGTQAQFIMEHYGIPQISTGDMLRAAVKAGTPLGLEAKKVMDAGQLVSDELIIGLVKERIAQDDCANGFLLDGFPRTIPQADAMAANGISIDHVIEIDVPDEEIVNRMSGRRVHPGSGRVYHVVFNPPKVEGKDDVTGEDLVIRPDDEESTVRKRLGIYHEQTKPLVDYYGKVAAEGNTKYTKFDGTQSVAEVSKLIQAALS.

10-15 is an ATP binding site; the sequence is GAGKGT. An NMP region spans residues 30–59; that stretch reads STGDMLRAAVKAGTPLGLEAKKVMDAGQLV. AMP is bound by residues Thr-31, Arg-36, 57–59, 85–88, and Gln-92; these read QLV and GFPR. An LID region spans residues 122 to 159; that stretch reads GRRVHPGSGRVYHVVFNPPKVEGKDDVTGEDLVIRPDD. Residues Arg-123 and 132-133 contribute to the ATP site; that span reads VY. Positions 156 and 167 each coordinate AMP. Gln-200 provides a ligand contact to ATP.

It belongs to the adenylate kinase family. In terms of assembly, monomer.

The protein resides in the cytoplasm. It carries out the reaction AMP + ATP = 2 ADP. The protein operates within purine metabolism; AMP biosynthesis via salvage pathway; AMP from ADP: step 1/1. Catalyzes the reversible transfer of the terminal phosphate group between ATP and AMP. Plays an important role in cellular energy homeostasis and in adenine nucleotide metabolism. This chain is Adenylate kinase, found in Shewanella amazonensis (strain ATCC BAA-1098 / SB2B).